The following is a 275-amino-acid chain: Nitrogenase iron protein 3 (275 aa).

9-16 (GKGGIGKS) contacts ATP. C97 contacts [4Fe-4S] cluster. R100 is modified (ADP-ribosylarginine; by dinitrogenase reductase ADP-ribosyltransferase). Residue C132 coordinates [4Fe-4S] cluster.

It belongs to the NifH/BchL/ChlL family. In terms of assembly, homodimer. Requires [4Fe-4S] cluster as cofactor. The reversible ADP-ribosylation of Arg-100 inactivates the nitrogenase reductase and regulates nitrogenase activity.

The catalysed reaction is N2 + 8 reduced [2Fe-2S]-[ferredoxin] + 16 ATP + 16 H2O = H2 + 8 oxidized [2Fe-2S]-[ferredoxin] + 2 NH4(+) + 16 ADP + 16 phosphate + 6 H(+). The key enzymatic reactions in nitrogen fixation are catalyzed by the nitrogenase complex, which has 2 components: the iron protein (component 2) and a component 1 which is either a molybdenum-iron protein, a vanadium-iron, or an iron-iron protein. The protein is Nitrogenase iron protein 3 (anfH) of Azotobacter vinelandii.